The primary structure comprises 151 residues: UPF0178 protein PFLU_5917 (151 aa).

It belongs to the UPF0178 family.

The sequence is that of UPF0178 protein PFLU_5917 from Pseudomonas fluorescens (strain SBW25).